The chain runs to 141 residues: MAKQVEKLVKLQIPAGKATPAPPVGPALGQAGVNIMGFTKEFNARTADQAGMIIPVVISVYDDKSFTFITKTPPAAVLLKKAAGVQKGSGEPNKTKVASVTKAQIKEIAELKMPDLNASSVETAMSMIEGTAKSMGFTVTD.

This sequence belongs to the universal ribosomal protein uL11 family. As to quaternary structure, part of the ribosomal stalk of the 50S ribosomal subunit. Interacts with L10 and the large rRNA to form the base of the stalk. L10 forms an elongated spine to which L12 dimers bind in a sequential fashion forming a multimeric L10(L12)X complex. One or more lysine residues are methylated.

Forms part of the ribosomal stalk which helps the ribosome interact with GTP-bound translation factors. The chain is Large ribosomal subunit protein uL11 from Lactococcus lactis subsp. lactis (strain IL1403) (Streptococcus lactis).